A 147-amino-acid chain; its full sequence is 3-hydroxyacyl-[acyl-carrier-protein] dehydratase FabZ (147 aa).

His50 is an active-site residue.

Belongs to the thioester dehydratase family. FabZ subfamily.

It localises to the cytoplasm. It catalyses the reaction a (3R)-hydroxyacyl-[ACP] = a (2E)-enoyl-[ACP] + H2O. Its function is as follows. Involved in unsaturated fatty acids biosynthesis. Catalyzes the dehydration of short chain beta-hydroxyacyl-ACPs and long chain saturated and unsaturated beta-hydroxyacyl-ACPs. This is 3-hydroxyacyl-[acyl-carrier-protein] dehydratase FabZ from Lactiplantibacillus plantarum (strain ATCC BAA-793 / NCIMB 8826 / WCFS1) (Lactobacillus plantarum).